We begin with the raw amino-acid sequence, 133 residues long: Core atranone cluster (CAC) protein 11 (133 aa).

It functions in the pathway mycotoxin biosynthesis. In terms of biological role, part of the core atranone cluster (CAC) which products are predicted to catalyze most or all steps of mycotoxin atranone synthesis, starting from geranylgeranyl pyrophosphate (GGPP). The initial cyclization of GGPP to dolabellane is probably performed by the terpene cyclase ATR13. The Baeyer-Villiger oxidation near the end of the atranone synthesis, which converts atranones D and E to atranones F and G is predicted to be catalyzed by the monooxygenase ATR8. Of the CAC's other predicted gene products, the reducing PKS ATR6 might synthesize a polyketide chain. This polyketide is probably transferred onto the atranone backbone by the polyketide transferase ATR5. Other predicted CAC products include 4 oxygenases (ATR2, ATR3, ATR4, and ATR14), 3 short-chain reductases (ATR7, ATR9, and ATR10), and a methyltransferase (ATR12). These may all be involved in the various steps of atranone biosynthesis, although their specific roles must await experimental determination. In Stachybotrys chlorohalonatus (strain IBT 40285), this protein is Core atranone cluster (CAC) protein 11.